A 269-amino-acid polypeptide reads, in one-letter code: Putative imidazole glycerol phosphate synthase subunit hisF2 (269 aa).

Aspartate 133 is an active-site residue.

This sequence belongs to the HisA/HisF family. As to quaternary structure, heterodimer of HisH and HisF.

Its subcellular location is the cytoplasm. The catalysed reaction is 5-[(5-phospho-1-deoxy-D-ribulos-1-ylimino)methylamino]-1-(5-phospho-beta-D-ribosyl)imidazole-4-carboxamide + L-glutamine = D-erythro-1-(imidazol-4-yl)glycerol 3-phosphate + 5-amino-1-(5-phospho-beta-D-ribosyl)imidazole-4-carboxamide + L-glutamate + H(+). It participates in amino-acid biosynthesis; L-histidine biosynthesis; L-histidine from 5-phospho-alpha-D-ribose 1-diphosphate: step 5/9. Functionally, IGPS catalyzes the conversion of PRFAR and glutamine to IGP, AICAR and glutamate. The HisF subunit catalyzes the cyclization activity that produces IGP and AICAR from PRFAR using the ammonia provided by the HisH subunit. This chain is Putative imidazole glycerol phosphate synthase subunit hisF2 (hisF2), found in Parasynechococcus marenigrum (strain WH8102).